The following is a 694-amino-acid chain: Elongation factor G (694 aa).

The 280-residue stretch at 8 to 287 folds into the tr-type G domain; it reads EDYRNFGIMA…AVVEFLPAPT (280 aa). GTP contacts are provided by residues 17–24, 86–90, and 140–143; these read AHIDAGKT, DTPGH, and NKMD.

The protein belongs to the TRAFAC class translation factor GTPase superfamily. Classic translation factor GTPase family. EF-G/EF-2 subfamily.

It localises to the cytoplasm. Functionally, catalyzes the GTP-dependent ribosomal translocation step during translation elongation. During this step, the ribosome changes from the pre-translocational (PRE) to the post-translocational (POST) state as the newly formed A-site-bound peptidyl-tRNA and P-site-bound deacylated tRNA move to the P and E sites, respectively. Catalyzes the coordinated movement of the two tRNA molecules, the mRNA and conformational changes in the ribosome. The chain is Elongation factor G from Brucella canis (strain ATCC 23365 / NCTC 10854 / RM-666).